We begin with the raw amino-acid sequence, 191 residues long: RNA pyrophosphohydrolase (191 aa).

The 144-residue stretch at 6–149 folds into the Nudix hydrolase domain; the sequence is GYRLNVGIIL…KREVYRQALS (144 aa). The short motif at 38-59 is the Nudix box element; it reads GGIKVDEDPDAAMFRELYEEVG. The tract at residues 162-191 is disordered; it reads GAQAVSDAGGTATRQIPVATEPSGPSSSQR.

It belongs to the Nudix hydrolase family. RppH subfamily. It depends on a divalent metal cation as a cofactor.

In terms of biological role, accelerates the degradation of transcripts by removing pyrophosphate from the 5'-end of triphosphorylated RNA, leading to a more labile monophosphorylated state that can stimulate subsequent ribonuclease cleavage. In Methylococcus capsulatus (strain ATCC 33009 / NCIMB 11132 / Bath), this protein is RNA pyrophosphohydrolase.